Consider the following 438-residue polypeptide: EF-hand calcium-binding domain-containing protein 3 (438 aa).

2 EF-hand domains span residues 47–82 (SQMR…LGMN) and 83–118 (LTKH…KNRF). 5 residues coordinate Ca(2+): aspartate 96, aspartate 98, aspartate 100, lysine 102, and aspartate 107. Tyrosine 279 is modified (phosphotyrosine). The tract at residues 413–438 (SSSDISECDTDTGRKRKRKGFKGFRQ) is disordered. Residues 426–438 (RKRKRKGFKGFRQ) are compositionally biased toward basic residues.

This is EF-hand calcium-binding domain-containing protein 3 (EFCAB3) from Bos taurus (Bovine).